A 149-amino-acid polypeptide reads, in one-letter code: MDRTFVMVKPDGVQRGLVGEIVSRFEAKGLKLVGAKLELLPEGRVVEQYREHLEKPFFPGLKAYIMSGPCFLMAWEGKGVVAVVRRMVGATNPAEAAPGSIRGNFALDIGRNVIHASDSPESAARELGIHFAAGELVDYSRIDEPVLYE.

ATP contacts are provided by Lys-9, Phe-57, Arg-85, Thr-91, Arg-102, and Asn-112. His-115 serves as the catalytic Pros-phosphohistidine intermediate.

It belongs to the NDK family. Requires Mg(2+) as cofactor.

The protein resides in the cytoplasm. It carries out the reaction a 2'-deoxyribonucleoside 5'-diphosphate + ATP = a 2'-deoxyribonucleoside 5'-triphosphate + ADP. The enzyme catalyses a ribonucleoside 5'-diphosphate + ATP = a ribonucleoside 5'-triphosphate + ADP. Functionally, major role in the synthesis of nucleoside triphosphates other than ATP. The ATP gamma phosphate is transferred to the NDP beta phosphate via a ping-pong mechanism, using a phosphorylated active-site intermediate. This is Nucleoside diphosphate kinase from Methanoculleus marisnigri (strain ATCC 35101 / DSM 1498 / JR1).